The following is a 181-amino-acid chain: Large ribosomal subunit protein uL5 (181 aa).

It belongs to the universal ribosomal protein uL5 family. As to quaternary structure, part of the 50S ribosomal subunit; part of the 5S rRNA/L5/L18/L25 subcomplex. Contacts the 5S rRNA and the P site tRNA. Forms a bridge to the 30S subunit in the 70S ribosome.

Its function is as follows. This is one of the proteins that bind and probably mediate the attachment of the 5S RNA into the large ribosomal subunit, where it forms part of the central protuberance. In the 70S ribosome it contacts protein S13 of the 30S subunit (bridge B1b), connecting the 2 subunits; this bridge is implicated in subunit movement. Contacts the P site tRNA; the 5S rRNA and some of its associated proteins might help stabilize positioning of ribosome-bound tRNAs. This is Large ribosomal subunit protein uL5 from Thermosipho africanus (strain TCF52B).